A 468-amino-acid chain; its full sequence is Acetyl-CoA decarbonylase/synthase complex subunit gamma 2 (468 aa).

The 4Fe-4S domain maps to 1–60 (MKINSPLEAYKYLPQTNCGECGEATCMAFASKLIDRSGKPTQCPPLVKEKKFAKKLAELE). The [4Fe-4S] cluster site is built by Cys-18, Cys-21, Cys-26, and Cys-43.

Heterodimer of delta and gamma chains. The ACDS complex is made up of alpha, epsilon, beta, gamma and delta chains with a probable stoichiometry of (alpha(2)epsilon(2))(4)-beta(8)-(gamma(1)delta(1))(8). It depends on corrinoid as a cofactor. Requires [4Fe-4S] cluster as cofactor.

It catalyses the reaction 5,6,7,8-tetrahydrosarcinapterin + methyl-Co(III)-[corrinoid Fe-S protein] = 5-methyltetrahydrosarcinapterin + Co(I)-[corrinoid Fe-S protein] + H(+). It functions in the pathway one-carbon metabolism; methanogenesis from acetate. In terms of biological role, part of a complex that catalyzes the reversible cleavage of acetyl-CoA, allowing growth on acetate as sole source of carbon and energy. This is Acetyl-CoA decarbonylase/synthase complex subunit gamma 2 from Methanosarcina thermophila.